Consider the following 193-residue polypeptide: Interleukin-18-binding protein (193 aa).

A signal peptide spans 1-28; that stretch reads MTMRHCWTAGPSSWWVLLLYVHVILARA. Residues 60–161 enclose the Ig-like C2-type domain; that stretch reads PALDVIWPEK…QVAQYHIILA (102 aa). N-linked (GlcNAc...) asparagine glycosylation is found at asparagine 74, asparagine 98, asparagine 120, and asparagine 142. Cysteine 81 and cysteine 145 form a disulfide bridge. Positions 172–185 are enriched in polar residues; that stretch reads SPSQETLSSHSPVS. The interval 172-193 is disordered; the sequence is SPSQETLSSHSPVSRSAGPGVA.

Its subcellular location is the secreted. Functionally, binds to IL-18 and inhibits its activity. Functions as an inhibitor of the early TH1 cytokine response. This Mus musculus (Mouse) protein is Interleukin-18-binding protein (Il18bp).